The following is a 428-amino-acid chain: Tubby-like F-box protein 5 (428 aa).

The disordered stretch occupies residues 17–65 (IGSMSRRAADGRAGGGRGGSRHSWPVLWSEQQQPPQQQQLQRQEHQQQQ). The segment covering 47-65 (QQQPPQQQQLQRQEHQQQQ) has biased composition (low complexity). An F-box domain is found at 65-117 (QGRWANLPPELLLDVIQRVEASEATWPARRQVVACAAVCRSWREVTKEVVKTL).

Belongs to the TUB family. Ubiquitous.

This chain is Tubby-like F-box protein 5 (TULP5), found in Oryza sativa subsp. japonica (Rice).